The sequence spans 64 residues: Large ribosomal subunit protein bL35 (64 aa).

The span at 1 to 42 shows a compositional bias: basic residues; that stretch reads MPKAKTHSGASKRFRRTGTGKIVRQKANRRHLLEHKPTKRTR. A disordered region spans residues 1–64; it reads MPKAKTHSGA…NSRINKLLNG (64 aa). Positions 48 to 58 are enriched in polar residues; it reads TTVSAADNSRI.

It belongs to the bacterial ribosomal protein bL35 family.

The protein is Large ribosomal subunit protein bL35 of Mycolicibacterium smegmatis (strain ATCC 700084 / mc(2)155) (Mycobacterium smegmatis).